We begin with the raw amino-acid sequence, 692 residues long: MKVFCGRANPTTGSLEWLEEDEHYDYHQEIARSSYADMLHDKDRNIKYYQGIRAAVSRVKDRGQKALVLDIGTGTGLLSMMAVTAGADFCYAIEVFKPMADAAVKIVEKNGFSDKIKVINKHSTEVTVGPDGDLPCRANILVTELFDTELIGEGALPSYEHAHRHLVQENCEAVPHKATVYAQLVESRRMWSWNKLFPVHVQTSLGEQVIVPPSELERCPGAPSVYDIQLNQVPSTDFTALSDVLPMFSVDFSKQVSSSAACHSKQFVPLASGQAQVVLSWWDIEMDPEGKITCTMAPFWAQTNPQELQWRDHWMQCVYFLPQEEPVVQGSPRCLVAHHDDYCVWYSLQRTSADENEEVYQVRPVCDCQAHLLWNRPRFGEINDQDRTDQYAQALRTVLMPGTICLCVSDGSLLSLLAHHLGAEQVFTVESSAASYRLMKRIFKANHLEDKVSIIKKRPELLTSADLEGKKVSLLLGEPFFATSLLPWHNLYFWYARTSVDQHLEPGAVVMPQAASLYAMIVEFRDLWRIRSPCGDCEGFDVHIMDDMIKHSLDFRESREAEPHPLWEYPCRSLSEPQQILTFDFQQPVPQKPVHAEGSMELRRPGKSHGAVLWMEYHLTPDSTVSTGLMNPLEDKGDCCWNPHCKQAVYFLSTTVDPRVPLDGPQSVSYAVEFHPLTGDITMEFRLADTLN.

2 consecutive SAM-dependent MTase PRMT-type domains span residues 14-345 and 358-684; these read SLEW…YCVW and EVYQ…ITME. An Omega-N-methylarginine modification is found at Arg-32. Catalysis depends on residues Glu-144 and Glu-153.

This sequence belongs to the class I-like SAM-binding methyltransferase superfamily. Protein arginine N-methyltransferase family. PRMT7 subfamily. As to quaternary structure, interacts with CTCFL, PRMT5 and SNRPD3. Homodimer and heterodimer.

Its subcellular location is the cytoplasm. The protein localises to the nucleus. It carries out the reaction L-arginyl-[protein] + S-adenosyl-L-methionine = N(omega)-methyl-L-arginyl-[protein] + S-adenosyl-L-homocysteine + H(+). Its function is as follows. Arginine methyltransferase that can both catalyze the formation of omega-N monomethylarginine (MMA) and symmetrical dimethylarginine (sDMA), with a preference for the formation of MMA. Specifically mediates the symmetrical dimethylation of arginine residues in the small nuclear ribonucleoproteins Sm D1 (SNRPD1) and Sm D3 (SNRPD3); such methylation being required for the assembly and biogenesis of snRNP core particles. Specifically mediates the symmetric dimethylation of histone H4 'Arg-3' to form H4R3me2s. Plays a role in gene imprinting by being recruited by CTCFL at the H19 imprinted control region (ICR) and methylating histone H4 to form H4R3me2s, possibly leading to recruit DNA methyltransferases at these sites. May also play a role in embryonic stem cell (ESC) pluripotency. Also able to mediate the arginine methylation of histone H2A and myelin basic protein (MBP) in vitro; the relevance of such results is however unclear in vivo. This is Protein arginine N-methyltransferase 7 (Prmt7) from Cricetulus longicaudatus (Long-tailed dwarf hamster).